Consider the following 348-residue polypeptide: L-threonine 3-dehydrogenase (348 aa).

C42 contributes to the Zn(2+) binding site. Active-site charge relay system residues include T44 and H47. Zn(2+)-binding residues include H67, E68, C97, C100, C103, and C111. Residues L179, E199, R204, 266-268 (LGL), and 291-292 (IT) each bind NAD(+).

It belongs to the zinc-containing alcohol dehydrogenase family. In terms of assembly, homotetramer. It depends on Zn(2+) as a cofactor.

The protein localises to the cytoplasm. The enzyme catalyses L-threonine + NAD(+) = (2S)-2-amino-3-oxobutanoate + NADH + H(+). It functions in the pathway amino-acid degradation; L-threonine degradation via oxydo-reductase pathway; glycine from L-threonine: step 1/2. Catalyzes the NAD(+)-dependent oxidation of L-threonine to 2-amino-3-ketobutyrate. To a lesser extent, also catalyzes the oxidation of L-serine, D-threonine, butan-2,3-diol, butan-1,2-diol, and propan-1,2-diol and cannot oxidize other L-amino acids. Cannot utilize NADP(H) instead of NAD(H). The chain is L-threonine 3-dehydrogenase from Pyrococcus furiosus (strain ATCC 43587 / DSM 3638 / JCM 8422 / Vc1).